A 547-amino-acid chain; its full sequence is Ribosome protection protein VmlR (547 aa).

The region spanning 5-200 (VTLTNVSYEV…FREKKRLTQQ (196 aa)) is the ABC transporter 1 domain. Position 37–44 (37–44 (GKNGAGKS)) interacts with ATP. The interval 183–289 (GNYSGYMKFR…SIDTTHKTGK (107 aa)) is antibiotic resistance domain (ARD). Coiled-coil stretches lie at residues 193-222 (EKKR…GLAS) and 245-269 (AKRT…AKAE). The ABC transporter 2 domain maps to 292-504 (LEVQNVTKAF…REELRLKLET (213 aa)). Residue 324 to 331 (GPNGSGKT) participates in ATP binding. The interval 483–547 (KQLNDVPSER…KELDHQDKKD (65 aa)) is C-terminal extension (CTE). Residues 488 to 543 (VPSERNEREELRLKLETERQEVLGKLSFMTPNDKGYKELDQAFNELTKRIKELDHQ) adopt a coiled-coil conformation.

This sequence belongs to the ABC transporter superfamily. ABCF family. ARE2 subfamily. As to quaternary structure, binds within the E-site of the 70S ribosome, where it contacts ribosomal proteins L1, L5, L33-1, S7, S11, the 16 and 23S rRNAs and the acceptor arm of the P-site tRNA.

The protein resides in the cytoplasm. Its function is as follows. Recognizes and binds in the vacant E-site of ribosomes stalled by some peptidyltransferase center (PTC)-targeting antibiotics. Makes contact with the PTC and both ribosomal subunits. Induces conformational changes in the P-site, which allows it to dislodge the antibiotic from its PTC binding site. Binds to ribosomes either directly following translation initation or subsequent to E tRNA release during elongation. Involved in resistance to a narrow spectrum of antibiotics (the streptogramin A antibiotic virginiamycin M, the lincosamide antibiotic lincomycin and the pleuromutilin antibiotic tiamulin). In Bacillus subtilis (strain 168), this protein is Ribosome protection protein VmlR.